The chain runs to 696 residues: Tegument protein UL47 (696 aa).

Basic residues-rich tracts occupy residues 1 to 15 (MSVRGHAVRRRRAST) and 70 to 81 (RRRREARGHPGS). 2 disordered regions span residues 1–39 (MSVRGHAVRRRRASTRSHAPSAHRADSPVEDEPEGGGVG) and 54–130 (SEVE…YLGP). Residues 57–84 (EAAGEMASEEPPPRRRREARGHPGSRRA) are RNA-binding. The short motif at 70 to 84 (RRRREARGHPGSRRA) is the Nuclear localization signal element. Residues 87 to 103 (ARAAAPPRRASFPRPRS) show a composition bias toward low complexity. The Nuclear export signal motif lies at 650 to 673 (SVLGPRVRVVDIMAQFRKLLMGDE).

This sequence belongs to the alphaherpesvirinae HHV-1 UL47 family. As to quaternary structure, interacts with US3 kinase. Interacts with UL31 and UL34; these interactions seem important for efficient virion nuclear egress. Interacts with UL41/VHS. Phosphorylated by US3. This phosphorylation is required for proper nuclear localization.

The protein localises to the virion tegument. The protein resides in the host nucleus. It is found in the host cytoplasm. Tegument protein that can bind to various RNA transcripts. Plays a role in the attenuation of selective viral and cellular mRNA degradation by modulating the activity of host shutoff RNase UL41/VHS. Also plays a role in the primary envelopment of virions in the perinuclear space, probably by interacting with two nuclear egress proteins UL31 and UL34. The protein is Tegument protein UL47 of Human herpesvirus 2 (strain HG52) (HHV-2).